Consider the following 672-residue polypeptide: DNA ligase (672 aa).

Residues 35–39, 84–85, and Glu116 contribute to the NAD(+) site; these read DAEYD and SL. Residue Lys118 is the N6-AMP-lysine intermediate of the active site. NAD(+) contacts are provided by Arg139, Glu179, Lys295, and Lys319. Positions 413, 416, 431, and 436 each coordinate Zn(2+). The BRCT domain maps to 593–672; the sequence is PRSAPLTGKT…EEFLRLAGKI (80 aa).

It belongs to the NAD-dependent DNA ligase family. LigA subfamily. It depends on Mg(2+) as a cofactor. Mn(2+) is required as a cofactor.

The enzyme catalyses NAD(+) + (deoxyribonucleotide)n-3'-hydroxyl + 5'-phospho-(deoxyribonucleotide)m = (deoxyribonucleotide)n+m + AMP + beta-nicotinamide D-nucleotide.. Functionally, DNA ligase that catalyzes the formation of phosphodiester linkages between 5'-phosphoryl and 3'-hydroxyl groups in double-stranded DNA using NAD as a coenzyme and as the energy source for the reaction. It is essential for DNA replication and repair of damaged DNA. The chain is DNA ligase from Syntrophus aciditrophicus (strain SB).